The chain runs to 225 residues: UPF0700 transmembrane protein YoaK (225 aa).

A run of 6 helical transmembrane segments spans residues Leu-10–Gly-30, Val-56–Met-76, Ile-99–Ile-119, Gly-137–Ile-157, Thr-174–Ala-194, and Asp-197–Ala-217.

The protein belongs to the UPF0700 family.

It is found in the cell membrane. This Bacillus subtilis (strain 168) protein is UPF0700 transmembrane protein YoaK (yoaK).